We begin with the raw amino-acid sequence, 492 residues long: Glutamyl-tRNA(Gln) amidotransferase subunit A (492 aa).

Active-site charge relay system residues include Lys78 and Ser158. Ser182 serves as the catalytic Acyl-ester intermediate.

Belongs to the amidase family. GatA subfamily. As to quaternary structure, heterotrimer of A, B and C subunits.

The enzyme catalyses L-glutamyl-tRNA(Gln) + L-glutamine + ATP + H2O = L-glutaminyl-tRNA(Gln) + L-glutamate + ADP + phosphate + H(+). In terms of biological role, allows the formation of correctly charged Gln-tRNA(Gln) through the transamidation of misacylated Glu-tRNA(Gln) in organisms which lack glutaminyl-tRNA synthetase. The reaction takes place in the presence of glutamine and ATP through an activated gamma-phospho-Glu-tRNA(Gln). The chain is Glutamyl-tRNA(Gln) amidotransferase subunit A from Orientia tsutsugamushi (strain Ikeda) (Rickettsia tsutsugamushi).